The sequence spans 238 residues: Cysteine-rich venom protein (238 aa).

The first 19 residues, 1–19 (MIAFIVLLSLAAVLQQSSG), serve as a signal peptide directing secretion. Positions 38 to 164 (VDKHNALRRS…STKYLYVCQY (127 aa)) constitute an SCP domain. Disulfide bonds link cysteine 75/cysteine 153, cysteine 92/cysteine 165, cysteine 148/cysteine 162, cysteine 184/cysteine 191, cysteine 187/cysteine 196, cysteine 200/cysteine 233, cysteine 209/cysteine 227, and cysteine 218/cysteine 231. One can recognise a ShKT domain in the interval 200–233 (CKYEDAFTNCNELAKETKCKTEWIKSKCPATCFC).

Belongs to the CRISP family. In terms of tissue distribution, expressed by the venom gland.

The protein resides in the secreted. Blocks olfactory (CNGA2) and retinal (CNGA1) CNG channel currents. Does not affect neither depolarization- nor caffeine-induced contraction of smooth muscle. The polypeptide is Cysteine-rich venom protein (Drysdalia coronoides (White-lipped snake)).